The following is a 743-amino-acid chain: Merozoite surface protein 9 (743 aa).

A signal peptide spans 1-23 (MMNMKIVLFSLLLFVIRWNIISC). Residues 77–235 (KELLKEKQYT…VNDEDDVNDE (159 aa)) are interaction with MSP1 and host SLC4A1/Band 3. 4 disordered regions span residues 202-282 (KSQG…ATAY), 459-487 (DNQA…PTED), 512-540 (NNTP…ENFD), and 666-743 (VDAL…EESK). Positions 211–224 (SQNQNENNDNQKYQ) are enriched in polar residues. 8 tandem repeats follow at residues 226–231 (VNDEDD), 232–237 (VNDEED), 238–243 (TNDDED), 244–249 (TNDEED), 250–255 (TNDDED), 256–261 (TNDDED), 262–267 (TNDEED), and 268–273 (TNDEED). Residues 226 to 273 (VNDEDDVNDEEDTNDDEDTNDEEDTNDDEDTNDDEDTNDEEDTNDEED) form an 8 X 6 AA tandem repeats of [VT]-N-D-[ED]-[ED]-D region. Positions 226 to 274 (VNDEDDVNDEEDTNDDEDTNDEEDTNDDEDTNDDEDTNDEEDTNDEEDH) are enriched in acidic residues. The interval 364-528 (LKDNLINYEF…PPTQSKKKNK (165 aa)) is interaction with MSP1 and host SLC4A1/Band 3. Residues 459-473 (DNQAVDTKSMEEPKV) are compositionally biased toward basic and acidic residues. The segment covering 512 to 521 (NNTPNVVPPT) has biased composition (low complexity). The stretch at 644–733 (NQETEEEMEK…QEEEEEEEIV (90 aa)) forms a coiled coil. Residues 672–721 (KNKEEEEKEKEKEEKEKEEKEKEKEEKEKEEKEKEEKEKEEKEEEKKEKE) are compositionally biased toward basic and acidic residues. The span at 722–733 (EEQEEEEEEEIV) shows a compositional bias: acidic residues.

Belongs to the plasmodium ABRA family. As to quaternary structure, forms a complex composed of MSP1, MSP6, MSP7, MSP9 and MSP3; within the complex, MSP6 and MSP9 mediate the binding to the host erythrocyte. Interacts with MSP1 subunits p19 and p42; the interaction is direct. Interacts with host SLC4A1/Band 3 protein (via the 5ABC region). MSP1 subunits p19 or p42, and MSP9 form a co-ligand complex that interacts with host SLC4A1/Band 3 protein. Not glycosylated.

The protein resides in the cell membrane. Its subcellular location is the parasitophorous vacuole lumen. The protein localises to the secreted. During the asexual blood stage, involved in the sialic acid-independent (SAID) merozoite invasion of host erythrocytes by binding to host SLC4A1/Band 3 protein on the surface of the host erythrocyte. This Plasmodium falciparum (isolate 3D7) protein is Merozoite surface protein 9.